Reading from the N-terminus, the 295-residue chain is Acetylglutamate kinase (295 aa).

Residues 66–67 (GG), R88, and N193 each bind substrate.

It belongs to the acetylglutamate kinase family. ArgB subfamily.

The protein localises to the cytoplasm. The catalysed reaction is N-acetyl-L-glutamate + ATP = N-acetyl-L-glutamyl 5-phosphate + ADP. It participates in amino-acid biosynthesis; L-arginine biosynthesis; N(2)-acetyl-L-ornithine from L-glutamate: step 2/4. Its function is as follows. Catalyzes the ATP-dependent phosphorylation of N-acetyl-L-glutamate. The sequence is that of Acetylglutamate kinase from Bradyrhizobium diazoefficiens (strain JCM 10833 / BCRC 13528 / IAM 13628 / NBRC 14792 / USDA 110).